A 574-amino-acid chain; its full sequence is Developmental and secondary metabolism regulator veA (574 aa).

Disordered regions lie at residues 1-22 (MATR…SRIT), 39-60 (ERAR…VDPP), 255-500 (RSSD…GAGK), and 513-540 (RSYE…YPRR). Residues 25–230 (GKKLTYKLNV…AEQGCRVRIR (206 aa)) form the Velvet domain. The Nuclear localization signal motif lies at 39-44 (ERARAC). Composition is skewed to pro residues over residues 314–323 (RPLPPAPGPA) and 330–341 (PAPPAPPAPPSH). Composition is skewed to polar residues over residues 343–353 (PGYQSHLSFGS), 385–394 (HARNPSTSAE), 406–415 (RMSTERSSYP), and 448–458 (VAQSAAPRSQT). The interval 457 to 501 (QTPSSSLVPSLPPLKALSGDYPNNLSQSSSSTSQSPSHDLGAGKK) is PEST. Composition is skewed to low complexity over residues 459 to 474 (PSSS…KALS) and 482 to 493 (SQSSSSTSQSPS). Residues 513–525 (RSYEDSFGHDDRP) are compositionally biased toward basic and acidic residues.

The protein belongs to the velvet family. VeA subfamily. As to quaternary structure, component of the heterotrimeric velvet complex composed of laeA, veA and velB; VeA acting as a bridging protein between laeA and velB.

It localises to the nucleus. It is found in the cytoplasm. Component of the velvet transcription factor complex that controls sexual/asexual developmental ratio in response to light, promoting sexual development in the darkness while stimulating asexual sporulation under illumination. The velvet complex hat acts as a global regulator for secondary metabolite gene expression. Controls the expression of the penicillin gene cluster. This Aspergillus oryzae (strain ATCC 42149 / RIB 40) (Yellow koji mold) protein is Developmental and secondary metabolism regulator veA.